The sequence spans 187 residues: Proenkephalin-A (187 aa).

Propeptides lie at residues M52 to A70, D80 to Q143, V153 to Q163, and F173 to S187. The interval A81–S132 is disordered. Low complexity predominate over residues L88–L99. Residues R111 to K120 are compositionally biased toward basic and acidic residues. S187 bears the Phosphoserine mark.

Belongs to the opioid neuropeptide precursor family. Post-translationally, processed and degraded by ACE. The N-terminal domain contains 6 conserved cysteines thought to be involved in disulfide bonding and/or processing. In terms of processing, proenkephalin-A is cleaved by CTSL to generate Met-enkephalin.

It localises to the cytoplasmic vesicle. It is found in the secretory vesicle. The protein resides in the chromaffin granule lumen. The protein localises to the secreted. Functionally, neuropeptide that competes with and mimic the effects of opiate drugs. They play a role in a number of physiologic functions, including pain perception and responses to stress. This is Proenkephalin-A (PENK) from Felis catus (Cat).